The following is a 432-amino-acid chain: MDISAYQHMNIRMSTRGKRPLRNLTPNDKVRAIQRIHNGETKASVSRDLGVPESTLRGWCKNEQKLRFMCRQLGPDHLGIDTHTPPEKRAKFDLQLLPPKLATLPNYDDLGLSNFLFSATEFPTQKESLFEKLSLVEFVKKNGLHPSAIRELGDTHSLNAAANAVSGVDYSTNNMINQLTLLAQLNSKLSYQMGESADTDIKSPQSTTDITDTAREENSTKTSCPLLTVKNWAKDPAKRAHFNQATQLNPNNDKNNNAVDPSYSNLTTMKYPLIMEPVKSIYPETTVSAIPPPPFSTYSDLASAASAPTTDNDCQGAALLDWCKLFNASLNFLAFAAAAASMQPAGGTIPKSTATQLPATEADETYPFNNNLVKRLSPLAHSDASNESYFDSEPEDLSVRSCASVSSRNNSRSQTPDKSTATSIACLSDGEQ.

The HTH psq-type domain occupies 15 to 66 (TRGKRPLRNLTPNDKVRAIQRIHNGETKASVSRDLGVPESTLRGWCKNEQKL). The H-T-H motif DNA-binding region spans 42–62 (KASVSRDLGVPESTLRGWCKN). 2 disordered regions span residues 195–221 (ESAD…NSTK) and 401–432 (SCAS…DGEQ). 2 stretches are compositionally biased toward polar residues: residues 202 to 211 (KSPQSTTDIT) and 401 to 425 (SCAS…TSIA).

Interacts with itself, dan, ey and dac to form a complex (or complexes) containing the RD factors.

The protein localises to the nucleus. Its function is as follows. Probable transcription factor with a role in the retinal determination (RD) network. Regulates ato expression and is required for normal R8 induction and differentiation. Danr appears to repress Dan expression, but Dan is required for Danr expression anterior to the morphogenetic furrow (MF). Dan and Danr lie downstream of so and require dac function for highest levels of expression. Contributes to differentiation of antenna-specific characteristics; effector gene that acts downstream of homothorax (hth), Distal-less (Dll), cut (ct) and spineless (ss) genes to control differentiation of distal antennal structures. This Drosophila pseudoobscura pseudoobscura (Fruit fly) protein is Protein distal antenna-related.